We begin with the raw amino-acid sequence, 131 residues long: Small ribosomal subunit protein uS8 (131 aa).

This sequence belongs to the universal ribosomal protein uS8 family. Part of the 30S ribosomal subunit. Contacts proteins S5 and S12.

One of the primary rRNA binding proteins, it binds directly to 16S rRNA central domain where it helps coordinate assembly of the platform of the 30S subunit. This is Small ribosomal subunit protein uS8 from Cupriavidus necator (strain ATCC 17699 / DSM 428 / KCTC 22496 / NCIMB 10442 / H16 / Stanier 337) (Ralstonia eutropha).